Consider the following 220-residue polypeptide: Uracil-DNA glycosylase (220 aa).

The active-site Proton acceptor is aspartate 65.

This sequence belongs to the uracil-DNA glycosylase (UDG) superfamily. UNG family.

The protein localises to the cytoplasm. It catalyses the reaction Hydrolyzes single-stranded DNA or mismatched double-stranded DNA and polynucleotides, releasing free uracil.. Excises uracil residues from the DNA which can arise as a result of misincorporation of dUMP residues by DNA polymerase or due to deamination of cytosine. The polypeptide is Uracil-DNA glycosylase (Bacteroides thetaiotaomicron (strain ATCC 29148 / DSM 2079 / JCM 5827 / CCUG 10774 / NCTC 10582 / VPI-5482 / E50)).